Consider the following 405-residue polypeptide: S-adenosylmethionine synthase (405 aa).

Residue 141–146 (GQGSVD) coordinates ATP.

Belongs to the AdoMet synthase 2 family. Mg(2+) is required as a cofactor.

The catalysed reaction is L-methionine + ATP + H2O = S-adenosyl-L-methionine + phosphate + diphosphate. Its pathway is amino-acid biosynthesis; S-adenosyl-L-methionine biosynthesis; S-adenosyl-L-methionine from L-methionine: step 1/1. Catalyzes the formation of S-adenosylmethionine from methionine and ATP. In Methanococcus maripaludis (strain C7 / ATCC BAA-1331), this protein is S-adenosylmethionine synthase.